We begin with the raw amino-acid sequence, 496 residues long: MSYPQFGYPYSSTPQFLMTTNSLSTCCESSGRSLSDSAAAASAQTPVYCPVYESRLLATARHELNSAAALGVYGNPYTSTQGYGNYVTYGADASAFYSLNAFESKDGTGSAHAGIPQTAAYYPYEHTLSQYQYDRYGTMDGSSRRKNATRETTSTLKAWLQEHRKNPYPTKGEKIMLAIITKMTLTQVSTWFANARRRLKKENKMTWPPRNKCSDEKRPYDEEEEEEEEEEDSQKATIKNEKKTVDEEVVREDKALDLSDLEDFDTIESESSECELKQPFHHQPQDGHQLRQRDCVNDHCKDVILKMPLNSTVNQELDRTNICLKSGVDQCEQDVLRGRQRSGESKACFQQQQILDSKPRIWSLAHTATSLNQTEYPSCMLKHQGLSSPSSSSSSSAVSTPVCVIDRRQDSPVTSLRNWVDGVFHDPLFRHSTLNQALTNTTVSWATTKGTLIDSGSLGRSVGNPTNVKGQLPNIPHDTNKEFIAFQKSGSKMFCS.

The segment at residues 141 to 203 (GSSRRKNATR…NARRRLKKEN (63 aa)) is a DNA-binding region (homeobox; TALE-type). Residues 203-246 (NKMTWPPRNKCSDEKRPYDEEEEEEEEEEDSQKATIKNEKKTVD) are disordered. Over residues 221–232 (DEEEEEEEEEED) the composition is skewed to acidic residues.

This sequence belongs to the TALE/IRO homeobox family. As to expression, expressed in the neural plate in overlapping patterns with other irx members, which all share an anterior border of expression. At stage 20, expressed in a subset of cells in the developing hindbrain with expression appearing above the otic vesicle by stage 26. Expression in retina cells begins at stage 28, continuing at later stages and is limited to a subset of retinal cells of the optic cup. Also expressed in the ventricle of the heart from stage 36 (late tailbud) onwards. Only expressed in the pronephros at tadpole stage.

It is found in the nucleus. Its function is as follows. Acts partially redundantly with other irx members in neural patterning. Required for formation of the posterior forebrain, midbrain, hindbrain, and to a lesser extent, spinal cord. Patterns the neuroectoderm in both the anterior/posterior and dorsal/ventral axes. Does not appear to play a role in pronephros kidney development. This is Iroquois-class homeodomain protein irx-4-A (irx4-a) from Xenopus laevis (African clawed frog).